The chain runs to 140 residues: Zinc finger SWIM domain-containing protein 7 (140 aa).

Residues 76–114 (YTCFTSCHYCPCPAFSFTVLRRNESLMCKHLLAVILSQA) form an SWIM-type zinc finger.

It belongs to the SWS1 family.

It localises to the nucleus. Its function is as follows. Involved in early stages of the homologous recombination repair (HRR) pathway of double-stranded DNA breaks arising during DNA replication or induced by DNA-damaging agents. The chain is Zinc finger SWIM domain-containing protein 7 (zswim7) from Danio rerio (Zebrafish).